Here is a 610-residue protein sequence, read N- to C-terminus: Zinc metalloproteinase-disintegrin-like acurhagin (610 aa).

Positions 1-20 are cleaved as a signal peptide; that stretch reads MIQVLLVTICLAAFPYQGSS. Positions 21 to 191 are excised as a propeptide; it reads IILESGDVND…ISQLNLIPEQ (171 aa). Gln-192 carries the pyrrolidone carboxylic acid modification. The region spanning 198–394 is the Peptidase M12B domain; sequence KYVETVVVVD…HNPECIDNEP (197 aa). The Ca(2+) site is built by Glu-201 and Asp-285. 3 disulfides stabilise this stretch: Cys-309-Cys-389, Cys-349-Cys-373, and Cys-351-Cys-356. His-334 is a Zn(2+) binding site. Residue Glu-335 is part of the active site. Zn(2+)-binding residues include His-338 and His-344. Asn-372 is a glycosylation site (N-linked (GlcNAc...) asparagine). Ca(2+) contacts are provided by Cys-389, Asn-392, Asn-407, Leu-409, Glu-411, Glu-414, and Asp-417. One can recognise a Disintegrin domain in the interval 402 to 488; sequence PPLCGNELLE…ECPADVFHKN (87 aa). Disulfide bonds link Cys-405–Cys-434, Cys-416–Cys-429, Cys-418–Cys-424, Cys-428–Cys-451, Cys-442–Cys-448, Cys-447–Cys-473, Cys-460–Cys-480, Cys-467–Cys-499, Cys-492–Cys-504, Cys-511–Cys-561, Cys-526–Cys-572, Cys-539–Cys-549, Cys-556–Cys-598, and Cys-592–Cys-603. Residues 466–468 carry the D/ECD-tripeptide motif; the sequence is ECD. Asp-468, Pro-469, Glu-471, Asp-483, and Val-484 together coordinate Ca(2+).

This sequence belongs to the venom metalloproteinase (M12B) family. P-III subfamily. P-IIIa sub-subfamily. In terms of assembly, monomer. The cofactor is Zn(2+). In terms of processing, N-glycosylated. Expressed by the venom gland.

Its subcellular location is the secreted. The proteinase activity is slightly enhanced by Ca(2+) and Mg(2+), but is completely inhibited by Zn(2+). Is completely inhibited by phenanthroline and EDTA. Not inhibited by PMSF. Its function is as follows. Snake venom zinc metalloprotease that causes hemorrhage and dose-dependently inhibits platelet aggregation triggered by collagen. This inhibition is due to its binding to glycoprotein VI (GP6) and collagen. The binding to GP6 results in inhibition of the signaling pathway (decrease of tyrosine phosphorylation of signaling proteins such as Syk, LAT, PI3-K and PLCgamma2). Preferentially cleaves alpha chain (FGA) of fibrinogen, followed by beta chain (FGB). Also degrades the extracellular matrix protein fibronectin (FN1), and cleaves collagen and von Willebrand factor (VWF). The protein is Zinc metalloproteinase-disintegrin-like acurhagin of Deinagkistrodon acutus (Hundred-pace snake).